A 298-amino-acid polypeptide reads, in one-letter code: KH domain-containing protein At1g09660/At1g09670 (298 aa).

A KH domain is found at aspartate 152–leucine 219. Residues asparagine 266 to isoleucine 298 form a disordered region. Phosphoserine occurs at positions 273 and 287. Residues proline 274–proline 288 show a composition bias toward low complexity.

It is found in the nucleus. The chain is KH domain-containing protein At1g09660/At1g09670 from Arabidopsis thaliana (Mouse-ear cress).